A 146-amino-acid polypeptide reads, in one-letter code: Putative type II restriction enzyme MjaORF1200P (146 aa).

This sequence to A.pernix APE2001.

It catalyses the reaction Endonucleolytic cleavage of DNA to give specific double-stranded fragments with terminal 5'-phosphates.. A putative type II restriction enzyme, its methylase would be M.MjaORF1200P (AC Q58600). The protein is Putative type II restriction enzyme MjaORF1200P of Methanocaldococcus jannaschii (strain ATCC 43067 / DSM 2661 / JAL-1 / JCM 10045 / NBRC 100440) (Methanococcus jannaschii).